The primary structure comprises 167 residues: Inclusion membrane protein G (167 aa).

A run of 2 helical transmembrane segments spans residues V33 to F57 and V63 to L88. A sufficient for interaction with human 14-3-3 beta protein region spans residues S94 to F167. Residues K97–F167 are disordered. Over residues E122–L135 the composition is skewed to low complexity. The Phosphorylation-dependent binding motif signature appears at R161 to S166. S166 bears the Phosphoserine mark.

In terms of assembly, in infected HeLa cells colocalizes with host 14-3-3 protein (YWHAB); phosphorylation of Ser-166 is probably required. Interacts with Pkn1. Phosphorylated, possibly at more than one position, in infected HeLa cells. Phosphorylated by chlamydial kinase Pnk1.

It is found in the secreted. The protein resides in the host vacuole. The protein localises to the host pathogen-containing vacuole. It localises to the host pathogen-containing vacuole membrane. In terms of biological role, inclusion membrane protein probably involved in early modification events of the chlamydial inclusion. In Chlamydia trachomatis serovar L2 (strain ATCC VR-902B / DSM 19102 / 434/Bu), this protein is Inclusion membrane protein G.